Consider the following 250-residue polypeptide: tRNA (guanine-N(1)-)-methyltransferase (250 aa).

S-adenosyl-L-methionine-binding positions include Gly113 and 133–138; that span reads VGDYVL.

It belongs to the RNA methyltransferase TrmD family. Homodimer.

It is found in the cytoplasm. It carries out the reaction guanosine(37) in tRNA + S-adenosyl-L-methionine = N(1)-methylguanosine(37) in tRNA + S-adenosyl-L-homocysteine + H(+). Specifically methylates guanosine-37 in various tRNAs. The protein is tRNA (guanine-N(1)-)-methyltransferase of Proteus mirabilis (strain HI4320).